A 117-amino-acid chain; its full sequence is Large ribosomal subunit protein bL20 (117 aa).

It belongs to the bacterial ribosomal protein bL20 family.

Binds directly to 23S ribosomal RNA and is necessary for the in vitro assembly process of the 50S ribosomal subunit. It is not involved in the protein synthesizing functions of that subunit. In Wigglesworthia glossinidia brevipalpis, this protein is Large ribosomal subunit protein bL20.